We begin with the raw amino-acid sequence, 494 residues long: Glycerol kinase (494 aa).

Threonine 13 is an ADP binding site. Threonine 13, threonine 14, and serine 15 together coordinate ATP. Threonine 13 contributes to the sn-glycerol 3-phosphate binding site. Position 17 (arginine 17) interacts with ADP. The sn-glycerol 3-phosphate site is built by arginine 83, glutamate 84, tyrosine 135, and aspartate 244. Glycerol-binding residues include arginine 83, glutamate 84, tyrosine 135, aspartate 244, and glutamine 245. ADP-binding residues include threonine 266 and glycine 309. 4 residues coordinate ATP: threonine 266, glycine 309, glutamine 313, and glycine 410. ADP-binding residues include glycine 410 and asparagine 414.

This sequence belongs to the FGGY kinase family.

The enzyme catalyses glycerol + ATP = sn-glycerol 3-phosphate + ADP + H(+). It participates in polyol metabolism; glycerol degradation via glycerol kinase pathway; sn-glycerol 3-phosphate from glycerol: step 1/1. Its activity is regulated as follows. Inhibited by fructose 1,6-bisphosphate (FBP). Functionally, key enzyme in the regulation of glycerol uptake and metabolism. Catalyzes the phosphorylation of glycerol to yield sn-glycerol 3-phosphate. This Shewanella putrefaciens (strain CN-32 / ATCC BAA-453) protein is Glycerol kinase.